A 142-amino-acid chain; its full sequence is uncharacterized protein (142 aa).

The N-terminal stretch at 1 to 20 is a signal peptide; that stretch reads MPSVNEFFIFFLIVWHTCEC. The N-linked (GlcNAc...) asparagine glycan is linked to Asn-80.

This is an uncharacterized protein from Dictyostelium discoideum (Social amoeba).